Reading from the N-terminus, the 339-residue chain is Isopentenyl-diphosphate delta-isomerase (339 aa).

7-8 contributes to the substrate binding site; that stretch reads RK. FMN-binding positions include Ser65, 66–68, Ser96, and Asn125; that span reads SMT. 96-98 is a binding site for substrate; the sequence is SQR. Gln160 contributes to the substrate binding site. Glu161 lines the Mg(2+) pocket. Residues Lys192, Thr222, and 293 to 294 contribute to the FMN site; that span reads AG.

It belongs to the IPP isomerase type 2 family. In terms of assembly, homooctamer. Dimer of tetramers. The cofactor is FMN. NADPH is required as a cofactor. Requires Mg(2+) as cofactor.

It is found in the cytoplasm. The catalysed reaction is isopentenyl diphosphate = dimethylallyl diphosphate. Its function is as follows. Involved in the biosynthesis of isoprenoids. Catalyzes the 1,3-allylic rearrangement of the homoallylic substrate isopentenyl (IPP) to its allylic isomer, dimethylallyl diphosphate (DMAPP). This chain is Isopentenyl-diphosphate delta-isomerase, found in Vibrio parahaemolyticus serotype O3:K6 (strain RIMD 2210633).